The sequence spans 363 residues: Ataxin-3 (363 aa).

Residues 1–180 form the Josephin domain; sequence MESIFHERQE…DCEADQLLQM (180 aa). Cys14 functions as the Nucleophile in the catalytic mechanism. His119 serves as the catalytic Proton acceptor. The active site involves Asn134. Basic and acidic residues predominate over residues 192-209; sequence IGEETAQSRDQRLPRSDV. Residues 192-212 are disordered; sequence IGEETAQSRDQRLPRSDVDQA. UIM domains are found at residues 227 to 246, 247 to 266, and 337 to 356; these read EDEE…IDME, DEEA…SRQS, and SEED…ARNH. Polar residues predominate over residues 260–290; it reads MQGSRQSEFSNSLPQNASQPPHTSQTDSLSS. The segment at 260–363 is disordered; the sequence is MQGSRQSEFS…RNHLSTEEKK (104 aa). Residues 353-363 show a composition bias toward basic and acidic residues; sequence ARNHLSTEEKK.

In terms of tissue distribution, widely expressed.

The protein localises to the nucleus matrix. The protein resides in the nucleus. It is found in the lysosome membrane. The catalysed reaction is Thiol-dependent hydrolysis of ester, thioester, amide, peptide and isopeptide bonds formed by the C-terminal Gly of ubiquitin (a 76-residue protein attached to proteins as an intracellular targeting signal).. Deubiquitinating enzyme involved in protein homeostasis maintenance, transcription, cytoskeleton regulation, myogenesis and degradation of misfolded chaperone substrates. Binds long polyubiquitin chains and trims them, while it has weak or no activity against chains of 4 or less ubiquitins. Involved in degradation of misfolded chaperone substrates via its interaction with STUB1/CHIP: recruited to monoubiquitinated STUB1/CHIP, and restricts the length of ubiquitin chain attached to STUB1/CHIP substrates and preventing further chain extension. Interacts with key regulators of transcription and represses transcription: acts as a histone-binding protein that regulates transcription. Acts as a negative regulator of mTORC1 signaling in response to amino acid deprivation by mediating deubiquitination of RHEB, thereby promoting RHEB inactivation by the TSC-TBC complex. Regulates autophagy via the deubiquitination of 'Lys-402' of BECN1 leading to the stabilization of BECN1. The protein is Ataxin-3 (ATXN3) of Gallus gallus (Chicken).